A 203-amino-acid polypeptide reads, in one-letter code: Ribonuclease HII (203 aa).

Residues 14 to 203 (GVIAGVDEVG…ILNSTKRALL (190 aa)) enclose the RNase H type-2 domain. Residues D20, E21, and D112 each coordinate a divalent metal cation.

This sequence belongs to the RNase HII family. It depends on Mn(2+) as a cofactor. Requires Mg(2+) as cofactor.

It is found in the cytoplasm. It carries out the reaction Endonucleolytic cleavage to 5'-phosphomonoester.. Its function is as follows. Endonuclease that specifically degrades the RNA of RNA-DNA hybrids. This is Ribonuclease HII from Wolbachia sp. subsp. Brugia malayi (strain TRS).